The primary structure comprises 342 residues: Holliday junction branch migration complex subunit RuvB (342 aa).

A large ATPase domain (RuvB-L) region spans residues 4–182 (TDRLLSAGRR…FGIPIRLQFY (179 aa)). ATP-binding residues include leucine 21, arginine 22, glycine 63, lysine 66, threonine 67, threonine 68, arginine 172, tyrosine 182, and arginine 219. Residue threonine 67 participates in Mg(2+) binding. Residues 183–253 (TVEELERVVS…VADQSLNRLE (71 aa)) form a small ATPAse domain (RuvB-S) region. The interval 256–342 (NLGLDAMDRR…EAGQDGLFDV (87 aa)) is head domain (RuvB-H). DNA-binding residues include arginine 292, arginine 311, and arginine 316.

This sequence belongs to the RuvB family. In terms of assembly, homohexamer. Forms an RuvA(8)-RuvB(12)-Holliday junction (HJ) complex. HJ DNA is sandwiched between 2 RuvA tetramers; dsDNA enters through RuvA and exits via RuvB. An RuvB hexamer assembles on each DNA strand where it exits the tetramer. Each RuvB hexamer is contacted by two RuvA subunits (via domain III) on 2 adjacent RuvB subunits; this complex drives branch migration. In the full resolvosome a probable DNA-RuvA(4)-RuvB(12)-RuvC(2) complex forms which resolves the HJ.

Its subcellular location is the cytoplasm. The catalysed reaction is ATP + H2O = ADP + phosphate + H(+). Its function is as follows. The RuvA-RuvB-RuvC complex processes Holliday junction (HJ) DNA during genetic recombination and DNA repair, while the RuvA-RuvB complex plays an important role in the rescue of blocked DNA replication forks via replication fork reversal (RFR). RuvA specifically binds to HJ cruciform DNA, conferring on it an open structure. The RuvB hexamer acts as an ATP-dependent pump, pulling dsDNA into and through the RuvAB complex. RuvB forms 2 homohexamers on either side of HJ DNA bound by 1 or 2 RuvA tetramers; 4 subunits per hexamer contact DNA at a time. Coordinated motions by a converter formed by DNA-disengaged RuvB subunits stimulates ATP hydrolysis and nucleotide exchange. Immobilization of the converter enables RuvB to convert the ATP-contained energy into a lever motion, pulling 2 nucleotides of DNA out of the RuvA tetramer per ATP hydrolyzed, thus driving DNA branch migration. The RuvB motors rotate together with the DNA substrate, which together with the progressing nucleotide cycle form the mechanistic basis for DNA recombination by continuous HJ branch migration. Branch migration allows RuvC to scan DNA until it finds its consensus sequence, where it cleaves and resolves cruciform DNA. This is Holliday junction branch migration complex subunit RuvB from Rhizorhabdus wittichii (strain DSM 6014 / CCUG 31198 / JCM 15750 / NBRC 105917 / EY 4224 / RW1) (Sphingomonas wittichii).